The chain runs to 565 residues: Liver carboxylesterase 1 (565 aa).

An N-terminal signal peptide occupies residues 1–18 (MWLCALALASLAACTAWG). The N-linked (GlcNAc...) asparagine glycan is linked to asparagine 79. Cysteine 87 and cysteine 116 form a disulfide bridge. Residue serine 221 is the Acyl-ester intermediate of the active site. A disulfide bridge connects residues cysteine 273 and cysteine 284. Glutamate 353 acts as the Charge relay system in catalysis. Asparagine 389 is a glycosylation site (N-linked (GlcNAc...) asparagine). The Charge relay system role is filled by histidine 467. Position 565 (leucine 565) is a short sequence motif, prevents secretion from ER.

Belongs to the type-B carboxylesterase/lipase family. In terms of assembly, monomer.

Its subcellular location is the endoplasmic reticulum lumen. It carries out the reaction a carboxylic ester + H2O = an alcohol + a carboxylate + H(+). In terms of biological role, involved in the detoxification of xenobiotics and in the activation of ester and amide prodrugs. The sequence is that of Liver carboxylesterase 1 from Oryctolagus cuniculus (Rabbit).